A 179-amino-acid polypeptide reads, in one-letter code: Ribulose bisphosphate carboxylase small subunit, chloroplastic 3 (179 aa).

A chloroplast-targeting transit peptide spans 1 to 58 (MASSATMLSSVATAARAAPAQASMVAPFVGLKSASAFPVTQKPATGLSTLPSNGGRVQ).

Belongs to the RuBisCO small chain family. Heterohexadecamer of 8 large and 8 small subunits.

The protein resides in the plastid. Its subcellular location is the chloroplast. In terms of biological role, ruBisCO catalyzes two reactions: the carboxylation of D-ribulose 1,5-bisphosphate, the primary event in carbon dioxide fixation, as well as the oxidative fragmentation of the pentose substrate. Both reactions occur simultaneously and in competition at the same active site. Although the small subunit is not catalytic it is essential for maximal activity. This Fritillaria agrestis (Stinkbells) protein is Ribulose bisphosphate carboxylase small subunit, chloroplastic 3.